A 1133-amino-acid chain; its full sequence is ATP-dependent DNA helicase homolog MER3 (1133 aa).

The Helicase ATP-binding domain maps to 34–229 (PLCFHSDINM…WLKVPTAGIK (196 aa)). 47 to 54 (APTGSGKT) contacts ATP. A DEVH box motif is present at residues 165–168 (DEVH). Positions 263–460 (YIYDILMQYS…CLIEHLTAEI (198 aa)) constitute a Helicase C-terminal domain. One can recognise an SEC63 domain in the interval 536–847 (EPGRLMTKYY…FEEYIGIDLH (312 aa)). Positions 878–919 (ACIADDDNPVTSGPSNRKDKKDDMPSFKLIDDDSEEEKEPYV) are disordered. Residues 893-908 (NRKDKKDDMPSFKLID) are compositionally biased toward basic and acidic residues. The span at 909–919 (DDSEEEKEPYV) shows a compositional bias: acidic residues.

It belongs to the helicase family. SKI2 subfamily. As to expression, expressed in meiocytes during meiosis.

The protein localises to the nucleus. It catalyses the reaction Couples ATP hydrolysis with the unwinding of duplex DNA by translocating in the 3'-5' direction.. It carries out the reaction ATP + H2O = ADP + phosphate + H(+). DNA helicase required for crossover formation, complete synapsis of homologous chromosomes and bivalent formation during meiosis. Is specific to recombination events resulting in interference-sensitive crossovers (class I meiotic crossover). In Arabidopsis thaliana (Mouse-ear cress), this protein is ATP-dependent DNA helicase homolog MER3.